Here is a 904-residue protein sequence, read N- to C-terminus: Dual specificity tyrosine-phosphorylation-regulated kinase mbk-1 (904 aa).

Disordered regions lie at residues 1–151 (MNSG…MPPE), 250–272 (TVGRHTSLDSSGKPKTGKEASSS), and 285–345 (AVPN…YNNG). Residues 9–23 (NLQAWGQQPSSSYSN) show a composition bias toward polar residues. Residues 24-35 (TQQQHGQITGQI) show a composition bias toward low complexity. The segment covering 59 to 75 (ELEKSKKIAEQPTEHPQ) has biased composition (basic and acidic residues). Residues 112–123 (NNSNSQNFFPQQ) show a composition bias toward low complexity. The segment covering 286-297 (VPNTSSSGNQPH) has biased composition (polar residues). Residues 367–690 (ILSDTPVGKG…TLFPVSHTAY (324 aa)) form the Protein kinase domain. ATP is bound by residues 373–381 (VGKGSFGQV) and K396. The active-site Proton acceptor is D495. 2 disordered regions span residues 717-830 (YRPV…DQAE) and 881-904 (MSHGNVNAGSSRDMEKHDYPNNKL). A compositionally biased stretch (polar residues) spans 721–733 (PTSSHPISVTSSF). Positions 749–820 (SQQNYHNPNY…VQQHSSSSSR (72 aa)) are enriched in low complexity. A compositionally biased stretch (polar residues) spans 881–890 (MSHGNVNAGS). Over residues 892-904 (RDMEKHDYPNNKL) the composition is skewed to basic and acidic residues.

This sequence belongs to the protein kinase superfamily. CMGC Ser/Thr protein kinase family. MNB/DYRK subfamily. The cofactor is Mg(2+).

The protein resides in the nucleus. The enzyme catalyses L-seryl-[protein] + ATP = O-phospho-L-seryl-[protein] + ADP + H(+). It carries out the reaction L-threonyl-[protein] + ATP = O-phospho-L-threonyl-[protein] + ADP + H(+). The catalysed reaction is L-tyrosyl-[protein] + ATP = O-phospho-L-tyrosyl-[protein] + ADP + H(+). In terms of biological role, possible role in the function of olfactory neurons. The chain is Dual specificity tyrosine-phosphorylation-regulated kinase mbk-1 from Caenorhabditis briggsae.